Reading from the N-terminus, the 444-residue chain is tRNA modification GTPase MnmE (444 aa).

(6S)-5-formyl-5,6,7,8-tetrahydrofolate contacts are provided by Arg-24, Glu-81, and Lys-121. Residues 218 to 368 (GLTVVIAGPP…LLDALVGFAR (151 aa)) enclose the TrmE-type G domain. GTP is bound by residues 228-233 (NAGKST), 247-253 (SPQAGTT), 272-275 (DTAG), and 349-351 (SAR). Residues Ser-232 and Thr-253 each coordinate Mg(2+). Lys-444 contacts (6S)-5-formyl-5,6,7,8-tetrahydrofolate.

Belongs to the TRAFAC class TrmE-Era-EngA-EngB-Septin-like GTPase superfamily. TrmE GTPase family. Homodimer. Heterotetramer of two MnmE and two MnmG subunits. K(+) serves as cofactor.

Its subcellular location is the cytoplasm. In terms of biological role, exhibits a very high intrinsic GTPase hydrolysis rate. Involved in the addition of a carboxymethylaminomethyl (cmnm) group at the wobble position (U34) of certain tRNAs, forming tRNA-cmnm(5)s(2)U34. This chain is tRNA modification GTPase MnmE, found in Bradyrhizobium sp. (strain ORS 278).